A 670-amino-acid chain; its full sequence is MLPSKVVHRKAVRTVPLLLAALIFAGCTGQAPHTPPANVQGAADGTSDYYLQQVQQSADDNKVDWQLLAIRALLNEGKLPQAGDALTQLPADLNNIQRQERLLLLARLNVARQNLSGATDPLKQIDISALSQQQQVRYYQLQIAVGQGQPSLDVVRAWVALEPLQTSPADKQKNIDETWQALLQIPQQQINTLTINANENVLQGWLDLLGVYKNNVTAPDMLKSAIQDWQTRYPYNPAAKMLPTSLTQAQNLHPASMGKIALLLPLSGQAQVFANAIQKGFNDAKNGVLAQSTVAPSPAGPVQVPAATPGDAAVAVSPSATTSDKAVAEQPAPAINVTTAAPSASTQIQVYDTSSQPVEQLLTQAQNDGATLAIGPLLKSDVDKMLNSQTALNVLALNEPESVQNRPNICYFALSPEDEARDAAHHMWEQGKRAPLLLVPRTSLGDRVNKAFAAEWQKLGGATVLQQQFGSTAELKQGINSGAGIRLSGTPVNVQPQQQAGVTIAGLTIPAPPTDAQPGATSSNGRVDSVYIVATQDEMILIKPMIAMRISSRDNVGLYASSRSYQAGAGPDYRLELEGLQFSDAPLLSGANPALMQQAAKAFNNDYSLVRLYAMGVDAWTLANHFNEMRNQPGFQIKGDTGMLSANQDCIINRKLVWSQYHQGQIVPGT.

Residues Met-1 to Gly-26 form the signal peptide. Cys-27 carries N-palmitoyl cysteine lipidation. The S-diacylglycerol cysteine moiety is linked to residue Cys-27.

Belongs to the LpoA family. In terms of assembly, interacts with PBP1a.

The protein localises to the cell outer membrane. Regulator of peptidoglycan synthesis that is essential for the function of penicillin-binding protein 1A (PBP1a). The chain is Penicillin-binding protein activator LpoA from Erwinia tasmaniensis (strain DSM 17950 / CFBP 7177 / CIP 109463 / NCPPB 4357 / Et1/99).